Reading from the N-terminus, the 170-residue chain is Adenine phosphoribosyltransferase (170 aa).

This sequence belongs to the purine/pyrimidine phosphoribosyltransferase family. Homodimer.

It is found in the cytoplasm. It carries out the reaction AMP + diphosphate = 5-phospho-alpha-D-ribose 1-diphosphate + adenine. Its pathway is purine metabolism; AMP biosynthesis via salvage pathway; AMP from adenine: step 1/1. Its function is as follows. Catalyzes a salvage reaction resulting in the formation of AMP, that is energically less costly than de novo synthesis. This Bacillus mycoides (strain KBAB4) (Bacillus weihenstephanensis) protein is Adenine phosphoribosyltransferase.